Here is a 216-residue protein sequence, read N- to C-terminus: Protein-L-isoaspartate O-methyltransferase 1 (216 aa).

Ser-60 is an active-site residue.

Belongs to the methyltransferase superfamily. L-isoaspartyl/D-aspartyl protein methyltransferase family.

The protein localises to the cytoplasm. The catalysed reaction is [protein]-L-isoaspartate + S-adenosyl-L-methionine = [protein]-L-isoaspartate alpha-methyl ester + S-adenosyl-L-homocysteine. Functionally, catalyzes the methyl esterification of L-isoaspartyl residues in peptides and proteins that result from spontaneous decomposition of normal L-aspartyl and L-asparaginyl residues. It plays a role in the repair and/or degradation of damaged proteins. This is Protein-L-isoaspartate O-methyltransferase 1 (pcm1) from Archaeoglobus fulgidus (strain ATCC 49558 / DSM 4304 / JCM 9628 / NBRC 100126 / VC-16).